Consider the following 370-residue polypeptide: DNA primase large subunit PriL (370 aa).

[4Fe-4S] cluster-binding residues include Cys268, Cys341, Cys350, and Cys354.

This sequence belongs to the eukaryotic-type primase large subunit family. In terms of assembly, heterodimer of a small subunit (PriS) and a large subunit (PriL). The cofactor is [4Fe-4S] cluster.

Functionally, regulatory subunit of DNA primase, an RNA polymerase that catalyzes the synthesis of short RNA molecules used as primers for DNA polymerase during DNA replication. Stabilizes and modulates the activity of the small subunit, increasing the rate of DNA synthesis, and conferring RNA synthesis capability. The DNA polymerase activity may enable DNA primase to also catalyze primer extension after primer synthesis. May also play a role in DNA repair. The protein is DNA primase large subunit PriL of Archaeoglobus fulgidus (strain ATCC 49558 / DSM 4304 / JCM 9628 / NBRC 100126 / VC-16).